The sequence spans 432 residues: MKRKTIDIITLGCSKNLVDSEQLMRQLEEAGYDVTHDSEKPTGEIAVINTCGFIGDAKEESINMILEFAQEKEEGNLEKLFVMGCLSERYLKELAIEIPQVDKFYGKFNWKGLLQDLGKAYHEELHIERTLTTPKHYAYLKISEGCDRKCSYCAIPIITGRHVSRPIEEILDEVRYLVSNGVKEFQVIAQELTYYGVDLYKKQMLPELIERISEIPGVEWIRLHYAYPAHFPEELFRVMRERDNVCKYMDIALQHISDNMLQRMRRHVTKKETYRLIEQFRKEVPGIHLRTTLMVGHPGETEGDFEELKEFVRKVRFDRMGAFTYSEEEGTYAAANYEDSIPQELKQARLDELMAIQQGISTELSASKVGQKMKVIIDRIEGEYYIGRTEFDSPEVDPEVLIRCEGDNLMIGNFYQVQVIDSDEFDLFGEII.

The MTTase N-terminal domain occupies 4 to 122; the sequence is KTIDIITLGC…LLQDLGKAYH (119 aa). [4Fe-4S] cluster contacts are provided by Cys-13, Cys-51, Cys-85, Cys-146, Cys-150, and Cys-153. Positions 132 to 363 constitute a Radical SAM core domain; sequence TTPKHYAYLK…MAIQQGISTE (232 aa). Positions 366–432 constitute a TRAM domain; it reads ASKVGQKMKV…DEFDLFGEII (67 aa).

Belongs to the methylthiotransferase family. RimO subfamily. [4Fe-4S] cluster is required as a cofactor.

The protein resides in the cytoplasm. It catalyses the reaction L-aspartate(89)-[ribosomal protein uS12]-hydrogen + (sulfur carrier)-SH + AH2 + 2 S-adenosyl-L-methionine = 3-methylsulfanyl-L-aspartate(89)-[ribosomal protein uS12]-hydrogen + (sulfur carrier)-H + 5'-deoxyadenosine + L-methionine + A + S-adenosyl-L-homocysteine + 2 H(+). Catalyzes the methylthiolation of an aspartic acid residue of ribosomal protein uS12. The chain is Ribosomal protein uS12 methylthiotransferase RimO from Bacteroides fragilis (strain ATCC 25285 / DSM 2151 / CCUG 4856 / JCM 11019 / LMG 10263 / NCTC 9343 / Onslow / VPI 2553 / EN-2).